The following is a 407-amino-acid chain: Protein NIS1 (407 aa).

A compositionally biased stretch (low complexity) spans 40–61; sequence TSNSNSNSNSNSNTNSNTNSNS. 2 disordered regions span residues 40 to 64 and 251 to 315; these read TSNS…SDTK and RSIR…KLNT. Phosphoserine is present on residues Ser-260 and Ser-264. Residues 266 to 276 are compositionally biased toward low complexity; the sequence is PTTTPATATKT. Polar residues predominate over residues 277–302; it reads IKQNSTTPTTRSVYNKNVGRSNTSPS. 2 positions are modified to phosphoserine: Ser-300 and Ser-302. Basic residues predominate over residues 306 to 315; that stretch reads HPKRRGKLNT. The short motif at 391-398 is the SUMO-binding element; sequence IIIPDSQD.

Interacts with CBF2, GIS1, NAP1, PRM8, REI1, SHS1 and SMT3.

It is found in the bud neck. The protein localises to the cytoplasm. Its subcellular location is the cell cortex. In terms of biological role, may be involved in a mitotic signaling network. Binds sumoylated proteins and may stabilize SUMO chains. This Saccharomyces cerevisiae (strain YJM789) (Baker's yeast) protein is Protein NIS1 (NIS1).